A 109-amino-acid polypeptide reads, in one-letter code: Larval cuticle protein 1 (109 aa).

The N-terminal stretch at methionine 1–alanine 14 is a signal peptide. Residues glutamate 34–alanine 107 enclose the Chitin-binding type R&amp;R domain.

Its function is as follows. Component of the cuticle of the larva of Helicoverpa armigera. The polypeptide is Larval cuticle protein 1 (LCP1) (Helicoverpa armigera (Cotton bollworm)).